A 209-amino-acid chain; its full sequence is Potassium-transporting ATPase KdpC subunit (209 aa).

Residues 18-38 (MLAVFTLFGLGLAYSLVATGI) traverse the membrane as a helical segment.

This sequence belongs to the KdpC family. As to quaternary structure, the system is composed of three essential subunits: KdpA, KdpB and KdpC.

It localises to the cell inner membrane. Functionally, part of the high-affinity ATP-driven potassium transport (or Kdp) system, which catalyzes the hydrolysis of ATP coupled with the electrogenic transport of potassium into the cytoplasm. This subunit acts as a catalytic chaperone that increases the ATP-binding affinity of the ATP-hydrolyzing subunit KdpB by the formation of a transient KdpB/KdpC/ATP ternary complex. This is Potassium-transporting ATPase KdpC subunit from Xanthomonas oryzae pv. oryzae (strain MAFF 311018).